We begin with the raw amino-acid sequence, 510 residues long: Insulinoma-associated protein 1 (510 aa).

Residues 1–12 (MPRGFLVKRSKK) show a composition bias toward basic residues. The segment at 1 to 20 (MPRGFLVKRSKKSTPVSYRV) is SNAG domain. Disordered stretches follow at residues 1–110 (MPRG…SREH) and 176–226 (GAEA…PKAI). Positions 2 to 7 (PRGFLV) are required and sufficient for interaction with KDM1A. The tract at residues 43-58 (PPAPSPVPGPLPPPPP) is necessary for interaction with CCND1. Positions 43–59 (PPAPSPVPGPLPPPPPA) are enriched in pro residues. Low complexity-rich tracts occupy residues 64 to 74 (AALAAALACAP) and 209 to 218 (EPPAKAVKAP). The C2H2-type 1; atypical zinc-finger motif lies at 267–287 (FICQLCKEEYADPFALAQHKC). Residues 295 to 317 (YRCPECAKVFSCPANLASHRRWH) form a C2H2-type 2 zinc finger. The disordered stretch occupies residues 315-362 (RWHKPRPAPAAARAPEPEAAARAEAREAPGGGSDRDTPSPGGVSESGS). Positions 329–351 (PEPEAAARAEAREAPGGGSDRDT) are enriched in basic and acidic residues. 3 C2H2-type zinc fingers span residues 367–389 (YECHHCAKKFRRQAYLRKHLLAH), 441–464 (HLCPVCGESFASKGAQERHLRLLH), and 469–492 (FPCKYCPATFYSSPGLTRHINKCH).

Belongs to the INSM1 family. Interacts (via the SNAG domain) with HDAC1. Interacts (via the SNAG domain) with HDAC2. Interacts (via the SNAG domain) with KDM1A. Interacts (via the SNAG domain) with RCOR1. Interacts with SORBS1. Interacts (via the N-terminal region) with CCND1 (via cyclin N-terminal domain); the interaction competes with the binding of CCND1 to CDK4 during cell cycle progression and increases its transcriptional repressor activity. Interacts with HDAC3; the interaction increases its transcriptional repressor activity. As to expression, expressed in pancreatic duct cells. Expressed in several tumor cell lines of neuroendocrine origin including pheochromocytoma, medullary thyroid carcinoma, insulinoma, medulloblastoma, retinoblastoma, pheochromacytoma, medullary thyroid carcinoma and small cell lung carcinoma.

It is found in the nucleus. Its function is as follows. Sequence-specific DNA-binding transcriptional regulator that plays a key role in neurogenesis and neuroendocrine cell differentiation during embryonic and/or fetal development. Binds to the consensus sequence 5'-[TG][TC][TC][TT][GA]GGG[CG]A-3' in target promoters. Acts as a transcriptional repressor of NEUROD1 and INS expression via its interaction with cyclin CCND1 in a cell cycle-independent manner. Negatively regulates skeletal muscle-specific gene expression in endocrine cells of the pituitary by inhibiting the Notch signaling pathway. Represses target gene transcription by recruiting chromatin-modifying factors, such as HDAC1, HDAC2, HDAC3, KDM1A and RCOR1 histone deacetylases. Binds to its own promoter, suggesting autoregulation as a self-control feedback mechanism. Competes with histone H3 for the same binding site on the histone demethylase complex formed by KDM1A and RCOR1, and thereby inhibits demethylation of histone H3 at 'Lys-4'. Promotes the generation and expansion of neuronal basal progenitor cells in the developing neocortex. Involved in the differentiation of endocrine cells of the developing anterior pituitary gland, of the pancreas and intestine, and of sympatho-adrenal cells in the peripheral nervous system. Promotes cell cycle signaling arrest and inhibition of cellular proliferation. The sequence is that of Insulinoma-associated protein 1 (INSM1) from Homo sapiens (Human).